We begin with the raw amino-acid sequence, 1526 residues long: Ig-like and fibronectin type-III domain-containing protein 2 (1526 aa).

Positions methionine 1 to glycine 19 are cleaved as a signal peptide. Positions aspartate 20–proline 39 are disordered. Over aspartate 20–serine 1415 the chain is Extracellular. A compositionally biased stretch (low complexity) spans threonine 24–lysine 33. An Ig-like C2-type 1 domain is found at proline 39 to leucine 170. The cysteines at positions 61 and 154 are disulfide-linked. Residues asparagine 87, asparagine 143, asparagine 158, asparagine 181, asparagine 414, asparagine 427, asparagine 475, asparagine 489, asparagine 533, asparagine 590, asparagine 617, and asparagine 662 are each glycosylated (N-linked (GlcNAc...) asparagine). Residues alanine 379 to histidine 470 enclose the Fibronectin type-III 1 domain. In terms of domain architecture, Fibronectin type-III 2 spans alanine 587–threonine 678. Residues proline 682 to proline 724 form the WR1 domain. Asparagine 754, asparagine 871, asparagine 906, asparagine 939, asparagine 979, asparagine 1004, and asparagine 1049 each carry an N-linked (GlcNAc...) asparagine glycan. Fibronectin type-III domains are found at residues alanine 827–alanine 914 and alanine 924–aspartate 1020. The 92-residue stretch at alanine 1116–isoleucine 1207 folds into the Ig-like C2-type 2 domain. Cysteine 1137 and cysteine 1190 are disulfide-bonded. The N-linked (GlcNAc...) asparagine glycan is linked to asparagine 1250. The Fibronectin type-III 5 domain occupies alanine 1314–arginine 1406. The chain crosses the membrane as a helical span at residues alanine 1416 to leucine 1436. Residues serine 1437–threonine 1526 lie on the Cytoplasmic side of the membrane. The tract at residues serine 1485 to glycine 1518 is disordered. A compositionally biased stretch (polar residues) spans glutamine 1495–aspartate 1510.

Its subcellular location is the cell membrane. This is Ig-like and fibronectin type-III domain-containing protein 2 from Caenorhabditis elegans.